The chain runs to 301 residues: 4-diphosphocytidyl-2-C-methyl-D-erythritol kinase (301 aa).

K10 is a catalytic residue. 96–106 (PMGGGVGGGSS) lines the ATP pocket. The active site involves D138.

Belongs to the GHMP kinase family. IspE subfamily.

It catalyses the reaction 4-CDP-2-C-methyl-D-erythritol + ATP = 4-CDP-2-C-methyl-D-erythritol 2-phosphate + ADP + H(+). The protein operates within isoprenoid biosynthesis; isopentenyl diphosphate biosynthesis via DXP pathway; isopentenyl diphosphate from 1-deoxy-D-xylulose 5-phosphate: step 3/6. Its function is as follows. Catalyzes the phosphorylation of the position 2 hydroxy group of 4-diphosphocytidyl-2C-methyl-D-erythritol. In Alcanivorax borkumensis (strain ATCC 700651 / DSM 11573 / NCIMB 13689 / SK2), this protein is 4-diphosphocytidyl-2-C-methyl-D-erythritol kinase.